The sequence spans 272 residues: Cytochrome b-c1 complex subunit Rieske-1, mitochondrial (272 aa).

The transit peptide at 1–60 (MLRVAGRRLFSVSQRSSTATSFVVSRDHTLSDGGGDSSSAPRSLPSADLSSYHRSLIRGF) directs the protein to the mitochondrion. Positions 27-46 (DHTLSDGGGDSSSAPRSLPS) are disordered. The Mitochondrial matrix segment spans residues 61 to 109 (SSQVLAQGNEIGFGSEVPATVEAVKTPNSKIVYDDHNHERYPPGDPSKR). Residues 110–132 (AFAYFVLSGGRFVYASVLRLLVL) traverse the membrane as a helical segment. At 133 to 272 (KLIVSMSASK…FLEENKLLIG (140 aa)) the chain is on the mitochondrial intermembrane side. Residues 201-270 (VRVKNPEWLV…YSFLEENKLL (70 aa)) enclose the Rieske domain. Residues C215, H217, C234, and H237 each contribute to the [2Fe-2S] cluster site. C220 and C236 are oxidised to a cystine.

It belongs to the Rieske iron-sulfur protein family. In terms of assembly, component of the ubiquinol-cytochrome c oxidoreductase (cytochrome b-c1 complex, complex III, CIII), a multisubunit enzyme composed of 10 subunits. The complex is composed of 3 respiratory subunits cytochrome b (MT-CYB), cytochrome c1 (CYC1-1 or CYC1-2) and Rieske protein (UCR1-1 or UCR1-2), 2 core protein subunits MPPalpha1 (or MPPalpha2) and MPPB, and 5 low-molecular weight protein subunits QCR7-1 (or QCR7-2), UCRQ-1 (or UCRQ-2), QCR9, UCRY and probably QCR6-1 (or QCR6-2). The complex exists as an obligatory dimer and forms supercomplexes (SCs) in the inner mitochondrial membrane with NADH-ubiquinone oxidoreductase (complex I, CI), resulting in different assemblies (supercomplexes SCI(1)III(2) and SCI(2)III(4)). [2Fe-2S] cluster is required as a cofactor.

The protein resides in the mitochondrion inner membrane. It catalyses the reaction a quinol + 2 Fe(III)-[cytochrome c](out) = a quinone + 2 Fe(II)-[cytochrome c](out) + 2 H(+)(out). In terms of biological role, component of the ubiquinol-cytochrome c oxidoreductase, a multisubunit transmembrane complex that is part of the mitochondrial electron transport chain which drives oxidative phosphorylation. The respiratory chain contains 3 multisubunit complexes succinate dehydrogenase (complex II, CII), ubiquinol-cytochrome c oxidoreductase (cytochrome b-c1 complex, complex III, CIII) and cytochrome c oxidase (complex IV, CIV), that cooperate to transfer electrons derived from NADH and succinate to molecular oxygen, creating an electrochemical gradient over the inner membrane that drives transmembrane transport and the ATP synthase. The cytochrome b-c1 complex catalyzes electron transfer from ubiquinol to cytochrome c, linking this redox reaction to translocation of protons across the mitochondrial inner membrane, with protons being carried across the membrane as hydrogens on the quinol. In the process called Q cycle, 2 protons are consumed from the matrix, 4 protons are released into the intermembrane space and 2 electrons are passed to cytochrome c. The Rieske protein is a catalytic core subunit containing a [2Fe-2S] iron-sulfur cluster. It cycles between 2 conformational states during catalysis to transfer electrons from the quinol bound in the Q(0) site in cytochrome b to cytochrome c1. The protein is Cytochrome b-c1 complex subunit Rieske-1, mitochondrial of Arabidopsis thaliana (Mouse-ear cress).